We begin with the raw amino-acid sequence, 1290 residues long: Nonribosomal peptide synthetase 6 (1290 aa).

The segment at 1–27 is disordered; that stretch reads MTAIDVPWLSTPRRDNSHGTRSNSSCQ. The tract at residues 260-657 is adenylation; the sequence is SYQELDCQAS…AQVEHHLRSC (398 aa). The Carrier domain maps to 775-851; sequence APETELERKL…GLAQTHRHPV (77 aa). Serine 812 carries the O-(pantetheine 4'-phosphoryl)serine modification. A disordered region spans residues 846 to 870; the sequence is THRHPVRRAEVPRSSHDPDPFGRVR. Basic and acidic residues predominate over residues 852–870; that stretch reads RRAEVPRSSHDPDPFGRVR. The tract at residues 914-1162 is condensation; that stretch reads GGQLDPEQLR…PCMNIIPVRV (249 aa).

It belongs to the NRP synthetase family.

Functionally, nonribosomal peptide synthesis (NRPS) is a key mechanism responsible for the biosynthesis of bioactive metabolites which are potentially contributing to organismal virulence. The sequence is that of Nonribosomal peptide synthetase 6 (NRPS6) from Aspergillus fumigatus (strain ATCC MYA-4609 / CBS 101355 / FGSC A1100 / Af293) (Neosartorya fumigata).